A 241-amino-acid chain; its full sequence is Endothelial protein C receptor (241 aa).

The N-terminal stretch at 1–17 (MLTTLLPLLPLLLPGWA) is a signal peptide. Over 18-212 (LCSQEASDGP…GSQTGRSYTS (195 aa)) the chain is Extracellular. N-linked (GlcNAc...) asparagine glycosylation is found at asparagine 49, asparagine 66, asparagine 138, and asparagine 174. 2 cysteine pairs are disulfide-bonded: cysteine 120–cysteine 188 and cysteine 221–cysteine 234. A helical membrane pass occupies residues 213–233 (LVLGVLVGCFIVTGVAVGIFL). Topologically, residues 234 to 241 (CTGGRRRC) are cytoplasmic.

In terms of tissue distribution, expressed in endothelial cells.

The protein localises to the membrane. Binds activated protein C. Enhances protein C activation by the thrombin-thrombomodulin complex; plays a role in the protein C pathway controlling blood coagulation. The protein is Endothelial protein C receptor (PROCR) of Bos taurus (Bovine).